A 631-amino-acid chain; its full sequence is Cyclic nucleotide-gated channel alpha-3 (631 aa).

A compositionally biased stretch (polar residues) spans 1–18 (MAKVNTQCSQPSPTQLSI). Disordered stretches follow at residues 1–21 (MAKV…IKNA) and 71–98 (EVST…RKEE). Over 1 to 111 (MAKVNTQCSQ…VDPSSNIYYR (111 aa)) the chain is Cytoplasmic. The span at 87 to 98 (KPPDGGEGRKEE) shows a compositional bias: basic and acidic residues. The helical transmembrane segment at 112-133 (WLTAIALPVFYNWCLLVCRACF) threads the bilayer. The Extracellular portion of the chain corresponds to 134-139 (DELQSE). A helical membrane pass occupies residues 140–160 (HLTLWLVLDYSADVLYVLDML). Topologically, residues 161–187 (VRARTGFLEQGLMVRDTKRLWKHYTKT) are cytoplasmic. Residues 188 to 207 (LHFKLDILSLIPTDLAYLKL) form a helical membrane-spanning segment. At 208–211 (GVNY) the chain is on the extracellular side. The helical transmembrane segment at 212 to 229 (PELRFNRLLKFSRLFEFF) threads the bilayer. Residues 230–239 (DRTETRTNYP) are Cytoplasmic-facing. An ion conduction pathway region spans residues 239–347 (PNVFRIGNLV…GNVGSMISNM (109 aa)). A helical transmembrane segment spans residues 240 to 262 (NVFRIGNLVLYTLIIIHWNACIY). At 263–288 (FAISKFIGFGTDSWVYPNTSKPEYAR) the chain is on the extracellular side. Asn-280 is a glycosylation site (N-linked (GalNAc...) asparagine). 2 helical membrane passes run 289–319 (LSRK…DEEY) and 320–344 (LFVV…GSMI). Positions 306–309 (TIGE) are selectivity filter. The Cytoplasmic segment spans residues 345–631 (SNMNAPRVEF…ENSEDASKTD (287 aa)). Residues 349-426 (APRVEFQAKI…TLKKVRIFQD (78 aa)) form a C-linker region. Residues 429-549 (AGLLVELVLK…EEKGRQILMK (121 aa)) are cyclic nucleotide-binding domain. 6 residues coordinate 3',5'-cyclic GMP: Gly-489, Glu-490, Ser-492, Arg-505, Thr-506, and Asp-550. Residues 567–610 (VEEKVEYLESSLDILQTRFARLLAEYSASQMKLKQRLTRLESQM) adopt a coiled-coil conformation.

The protein belongs to the cyclic nucleotide-gated cation channel (TC 1.A.1.5) family. CNGA3 subfamily. In terms of assembly, forms heterotetrameric channels composed of CNGA3 and CNGB3 subunits with 3:1 stoichiometry. As to expression, prominently expressed in retina.

The protein resides in the cell membrane. It carries out the reaction Ca(2+)(in) = Ca(2+)(out). It catalyses the reaction Na(+)(in) = Na(+)(out). The enzyme catalyses K(+)(in) = K(+)(out). The catalysed reaction is NH4(+)(in) = NH4(+)(out). It carries out the reaction Rb(+)(in) = Rb(+)(out). It catalyses the reaction Li(+)(in) = Li(+)(out). The enzyme catalyses Cs(+)(in) = Cs(+)(out). Functionally, pore-forming subunit of the cone cyclic nucleotide-gated channel. Mediates cone photoresponses at bright light converting transient changes in intracellular cGMP levels into electrical signals. In the dark, cGMP levels are high and keep the channel open enabling a steady inward current carried by Na(+) and Ca(2+) ions that leads to membrane depolarization and neurotransmitter release from synaptic terminals. Upon photon absorption cGMP levels decline leading to channel closure and membrane hyperpolarization that ultimately slows neurotransmitter release and signals the presence of light, the end point of the phototransduction cascade. Pore-forming subunit of the gustatory cyclic nucleotide-gated channel. In the taste buds, may sense oral extracellular pH and conduct ion currents that modulate the excitability of taste cells. Conducts cGMP- and cAMP-gated ion currents, with permeability for monovalent and divalent cations. This Mus musculus (Mouse) protein is Cyclic nucleotide-gated channel alpha-3.